We begin with the raw amino-acid sequence, 322 residues long: Germ cell-specific gene 1-like protein (322 aa).

Residues 1 to 8 are Cytoplasmic-facing; it reads MELSRRNR. Residues 9–29 traverse the membrane as a helical segment; the sequence is SLLSVVLNLLALSFSVAAFFT. Over 30–125 the chain is Extracellular; sequence SYWCEGTHKV…IELSPDSEKG (96 aa). A helical membrane pass occupies residues 126-146; it reads VLWLSVISEFLYIILLSLGFL. Topologically, residues 147-166 are cytoplasmic; that stretch reads LMCLEFFSSSNFIDGLKINA. The chain crosses the membrane as a helical span at residues 167–187; that stretch reads FAAIITVLSGLLGMVAHMMYM. At 188-209 the chain is on the extracellular side; that stretch reads TVFQVTVNLGPKDWRPQTWYYG. Residues 210–230 form a helical membrane-spanning segment; sequence WSFGLAWLSFTLCMSASVLTL. Topologically, residues 231 to 322 are cytoplasmic; sequence NTYTKTILEF…MDLEDDGDQC (92 aa).

This sequence belongs to the GSG1 family. In terms of assembly, component of the AMPAR complex.

It localises to the cell membrane. The protein localises to the synapse. In terms of biological role, as a component of the AMPAR complex, modifies AMPA receptor (AMPAR) gating. This Xenopus tropicalis (Western clawed frog) protein is Germ cell-specific gene 1-like protein (gsg1l).